The following is a 377-amino-acid chain: 23S rRNA (uracil(747)-C(5))-methyltransferase RlmC (377 aa).

[4Fe-4S] cluster is bound by residues cysteine 3, cysteine 11, cysteine 14, and cysteine 87. 4 residues coordinate S-adenosyl-L-methionine: glutamine 212, phenylalanine 241, glutamate 262, and asparagine 307. Residue cysteine 334 is the Nucleophile of the active site.

Belongs to the class I-like SAM-binding methyltransferase superfamily. RNA M5U methyltransferase family. RlmC subfamily.

The enzyme catalyses uridine(747) in 23S rRNA + S-adenosyl-L-methionine = 5-methyluridine(747) in 23S rRNA + S-adenosyl-L-homocysteine + H(+). In terms of biological role, catalyzes the formation of 5-methyl-uridine at position 747 (m5U747) in 23S rRNA. The sequence is that of 23S rRNA (uracil(747)-C(5))-methyltransferase RlmC from Edwardsiella ictaluri (strain 93-146).